The primary structure comprises 336 residues: UDP-N-acetylenolpyruvoylglucosamine reductase (336 aa).

Positions 1–178 (MAHSLQTLHT…TTVHLALPKE (178 aa)) constitute an FAD-binding PCMH-type domain. Arg154 is an active-site residue. The active-site Proton donor is Ser222. Glu318 is a catalytic residue.

Belongs to the MurB family. FAD is required as a cofactor.

It localises to the cytoplasm. It carries out the reaction UDP-N-acetyl-alpha-D-muramate + NADP(+) = UDP-N-acetyl-3-O-(1-carboxyvinyl)-alpha-D-glucosamine + NADPH + H(+). The protein operates within cell wall biogenesis; peptidoglycan biosynthesis. Its function is as follows. Cell wall formation. This Pseudoalteromonas translucida (strain TAC 125) protein is UDP-N-acetylenolpyruvoylglucosamine reductase.